The primary structure comprises 364 residues: 3-isopropylmalate dehydrogenase (364 aa).

NAD(+) is bound at residue 79–90 (GPKWGTGSVRPE). R97, R107, R136, and D225 together coordinate substrate. Residues D225, D250, and D254 each contribute to the Mg(2+) site. 289-300 (GSAPDLPKNKVN) serves as a coordination point for NAD(+).

It belongs to the isocitrate and isopropylmalate dehydrogenases family. In terms of assembly, homodimer. It depends on Mg(2+) as a cofactor. Mn(2+) serves as cofactor.

The protein localises to the cytoplasm. The catalysed reaction is (2R,3S)-3-isopropylmalate + NAD(+) = 4-methyl-2-oxopentanoate + CO2 + NADH. It functions in the pathway amino-acid biosynthesis; L-leucine biosynthesis; L-leucine from 3-methyl-2-oxobutanoate: step 3/4. In terms of biological role, catalyzes the oxidation of 3-carboxy-2-hydroxy-4-methylpentanoate (3-isopropylmalate) to 3-carboxy-4-methyl-2-oxopentanoate. The product decarboxylates to 4-methyl-2 oxopentanoate. In Saccharomyces cerevisiae (strain ATCC 204508 / S288c) (Baker's yeast), this protein is 3-isopropylmalate dehydrogenase (LEU2).